A 433-amino-acid chain; its full sequence is Minor capsid protein (433 aa).

Positions 353-419 constitute a BIG2 domain; it reads TGVTLSQKTM…ADITATTSNG (67 aa).

This sequence belongs to the T7virus minor capsid protein family. Interacts with the connector protein and the major capsid protein.

The protein localises to the virion. Assembles with the major capsid protein to form an icosahedral capsid with a T=7 symmetry, about 60 nm in diameter, and consisting of 415 capsid proteins. The major and minor capsid proteins are incorporated into the capsid in about a 90/10 ratio respectively. Once the capsid is formed, encapsidates one single copy of the viral genome. This Escherichia coli (Bacteriophage T3) protein is Minor capsid protein (10).